A 379-amino-acid polypeptide reads, in one-letter code: Gonadotropin-releasing hormone II receptor (379 aa).

The Extracellular segment spans residues 1-40 (MSAGNGTPWGSAVGEEAWAGSGVAVEGSELPTFSTAAKVR). A helical transmembrane segment spans residues 41 to 60 (VGVTIVLFVSSAGGNLAVLW). Over 61-76 (SVTRPQPSQLRPSPVR) the chain is Cytoplasmic. Residues 77 to 96 (TLFAHLAAADLLVTFVVMPL) form a helical membrane-spanning segment. The Extracellular segment spans residues 97–114 (DATWNITVQWLAGDIACR). An N-linked (GlcNAc...) asparagine glycan is attached at Asn-101. Cysteines 113 and 188 form a disulfide. A helical membrane pass occupies residues 115–136 (TLMFLKLMAMYSAAFLPVVIGL). The Cytoplasmic segment spans residues 137–160 (DRQAAVLNPLGSRSGVRKLLGAAW). A helical transmembrane segment spans residues 161–178 (GLSFLLALPQLFLFHTVH). At 179-204 (RAGPVPFTQCVTKGSFKARWQETTYN) the chain is on the extracellular side. Residues 205-224 (LFTFCCLFLLPLIAMAICYS) traverse the membrane as a helical segment. Residues 225–278 (RIVLSVSSPQTRKGSHAPAGEFALRRSFDNRPRVCLRALRLALLILLTFILCWT) lie on the Cytoplasmic side of the membrane. The chain crosses the membrane as a helical span at residues 279 to 297 (PYYLLGLWYWFSPTMLTEV). At 298–303 (PPSLSH) the chain is on the extracellular side. The helical transmembrane segment at 304–323 (ILFLFGLLNAPLDPLLYGAF) threads the bilayer. Residues 324–379 (TFGCRRGHQELSIDSSKEGSGRMLQQEIHALRQQEVQKTVTSRSAGETKGISITSI) lie on the Cytoplasmic side of the membrane.

The protein belongs to the G-protein coupled receptor 1 family. Phosphorylated on the C-terminal cytoplasmic tail.

The protein localises to the cell membrane. In terms of biological role, receptor for gonadotropin releasing hormone II (GnRH II). This receptor mediates its action by association with G proteins that activate a phosphatidylinositol-calcium second messenger system. The polypeptide is Gonadotropin-releasing hormone II receptor (GNRHR2) (Chlorocebus aethiops (Green monkey)).